The sequence spans 183 residues: Protein Syd (183 aa).

This sequence belongs to the Syd family.

It is found in the cell inner membrane. Interacts with the SecY protein in vivo. May bind preferentially to an uncomplexed state of SecY, thus functioning either as a chelating agent for excess SecY in the cell or as a regulatory factor that negatively controls the translocase function. This Yersinia pestis bv. Antiqua (strain Antiqua) protein is Protein Syd.